Reading from the N-terminus, the 93-residue chain is Small ribosomal subunit protein uS19 (93 aa).

The protein belongs to the universal ribosomal protein uS19 family.

In terms of biological role, protein S19 forms a complex with S13 that binds strongly to the 16S ribosomal RNA. The polypeptide is Small ribosomal subunit protein uS19 (Tropheryma whipplei (strain TW08/27) (Whipple's bacillus)).